Here is a 367-residue protein sequence, read N- to C-terminus: Protein-glutamate methylesterase/protein-glutamine glutaminase 2 (367 aa).

One can recognise a Response regulatory domain in the interval 15–132; it reads RALIVDDSAL…SQSMHEMAEE (118 aa). 4-aspartylphosphate is present on aspartate 66. Positions 172 to 367 constitute a CheB-type methylesterase domain; it reads KTSVRNVLAI…MADEIVKIVR (196 aa). Catalysis depends on residues serine 184, histidine 211, and aspartate 311.

This sequence belongs to the CheB family. In terms of processing, phosphorylated by CheA. Phosphorylation of the N-terminal regulatory domain activates the methylesterase activity.

Its subcellular location is the cytoplasm. The enzyme catalyses [protein]-L-glutamate 5-O-methyl ester + H2O = L-glutamyl-[protein] + methanol + H(+). It catalyses the reaction L-glutaminyl-[protein] + H2O = L-glutamyl-[protein] + NH4(+). Involved in chemotaxis. Part of a chemotaxis signal transduction system that modulates chemotaxis in response to various stimuli. Catalyzes the demethylation of specific methylglutamate residues introduced into the chemoreceptors (methyl-accepting chemotaxis proteins or MCP) by CheR. Also mediates the irreversible deamidation of specific glutamine residues to glutamic acid. This is Protein-glutamate methylesterase/protein-glutamine glutaminase 2 from Methanosarcina mazei (strain ATCC BAA-159 / DSM 3647 / Goe1 / Go1 / JCM 11833 / OCM 88) (Methanosarcina frisia).